A 364-amino-acid chain; its full sequence is Paraneoplastic antigen Ma2 homolog (364 aa).

At A2 the chain carries N-acetylalanine. Over residues 335–353 (EEEEASFENESIEEPEEGD) the composition is skewed to acidic residues. The disordered stretch occupies residues 335–364 (EEEEASFENESIEEPEEGDGYGGWNHEGDD). Residues 354–364 (GYGGWNHEGDD) show a composition bias toward gly residues.

Belongs to the PNMA family.

Its subcellular location is the nucleus. The protein localises to the nucleolus. This is Paraneoplastic antigen Ma2 homolog (PNMA2) from Macaca fascicularis (Crab-eating macaque).